Consider the following 357-residue polypeptide: 3-isopropylmalate dehydrogenase (357 aa).

An NAD(+)-binding site is contributed by Gly76–Glu89. Residues Arg96, Arg106, Arg134, and Asp224 each contribute to the substrate site. Mg(2+)-binding residues include Asp224, Asp248, and Asp252. Gly282 to Asn294 serves as a coordination point for NAD(+).

It belongs to the isocitrate and isopropylmalate dehydrogenases family. LeuB type 1 subfamily. As to quaternary structure, homodimer. Mg(2+) serves as cofactor. The cofactor is Mn(2+).

Its subcellular location is the cytoplasm. The enzyme catalyses (2R,3S)-3-isopropylmalate + NAD(+) = 4-methyl-2-oxopentanoate + CO2 + NADH. It participates in amino-acid biosynthesis; L-leucine biosynthesis; L-leucine from 3-methyl-2-oxobutanoate: step 3/4. Functionally, catalyzes the oxidation of 3-carboxy-2-hydroxy-4-methylpentanoate (3-isopropylmalate) to 3-carboxy-4-methyl-2-oxopentanoate. The product decarboxylates to 4-methyl-2 oxopentanoate. The sequence is that of 3-isopropylmalate dehydrogenase from Xanthomonas oryzae pv. oryzae (strain MAFF 311018).